Here is a 97-residue protein sequence, read N- to C-terminus: MVLVKFKREKLTVMLEVQPGLSVYDAVKLLKSALNLPPDSILRIGSFEQNDWVAMENDALSKTIITNNTEYAFAEGEEPLLVEKPKDYDDMSEEISP.

This is an uncharacterized protein from Schizosaccharomyces pombe (strain 972 / ATCC 24843) (Fission yeast).